A 2217-amino-acid polypeptide reads, in one-letter code: Protein irg-7 (2217 aa).

An N-terminal signal peptide occupies residues 1–16 (MRNWVLIAALAVICLA). EGF-like domains are found at residues 370–405 (SGST…FHCQ) and 864–896 (TGTY…ESCE). Disulfide bonds link Cys-379–Cys-393, Cys-395–Cys-404, Cys-868–Cys-873, Cys-886–Cys-895, Cys-1212–Cys-1312, Cys-1285–Cys-1304, Cys-1508–Cys-1521, and Cys-1523–Cys-1532. Residues 1188 to 1313 (IGQYCIKFMA…CAEPRAFACQ (126 aa)) enclose the C-type lectin domain. One can recognise an EGF-like 3 domain in the interval 1499 to 1533 (TGSRCTVPICVNGGTRNPDEATCSCPDGYEGPNCQ). The 187-residue stretch at 2016 to 2202 (DVVFMIDGSQ…NNQIKTIQQL (187 aa)) folds into the VWFA domain.

The protein resides in the secreted. Its function is as follows. Plays a role in innate immunity, probably via the atf-7 pathway, to confer resistance to pathogenic bacteria. May also play a role in the regulation of longevity. In Caenorhabditis elegans, this protein is Protein irg-7.